Here is a 123-residue protein sequence, read N- to C-terminus: MSWIEPIISHFCQDLGVPTSSPLSPLIQLEMAQSGTLQLEQHGATLTLWLARSLAWHRCEDAMVKALTLTAAQKSGTLPLRAGWLGESQLVLFVSLDERSLTLPLLHQAFEQLLRLQQEVLAP.

Interacts with YscB to form a complex which specifically binds to YopN.

Its subcellular location is the cytoplasm. It localises to the cell inner membrane. Functionally, functions as a specific chaperone for YopN. It could facilitate the secretion and the subsequent translocation of YopN. This chain is Chaperone protein SycN (sycN), found in Yersinia enterocolitica serotype O:8 / biotype 1B (strain NCTC 13174 / 8081).